An 860-amino-acid polypeptide reads, in one-letter code: Alanine--tRNA ligase (860 aa).

Zn(2+)-binding residues include H563, H567, C665, and H669.

This sequence belongs to the class-II aminoacyl-tRNA synthetase family. Zn(2+) serves as cofactor.

The protein resides in the cytoplasm. The catalysed reaction is tRNA(Ala) + L-alanine + ATP = L-alanyl-tRNA(Ala) + AMP + diphosphate. Its function is as follows. Catalyzes the attachment of alanine to tRNA(Ala) in a two-step reaction: alanine is first activated by ATP to form Ala-AMP and then transferred to the acceptor end of tRNA(Ala). Also edits incorrectly charged Ser-tRNA(Ala) and Gly-tRNA(Ala) via its editing domain. In Vibrio parahaemolyticus serotype O3:K6 (strain RIMD 2210633), this protein is Alanine--tRNA ligase.